We begin with the raw amino-acid sequence, 215 residues long: Octanoyltransferase (215 aa).

The BPL/LPL catalytic domain maps to 31–206 (TDAPDEVWLV…QLVKHLDYAE (176 aa)). Substrate-binding positions include 70-77 (RGGQVTYH), 137-139 (SLG), and 150-152 (GLA). The active-site Acyl-thioester intermediate is Cys-168.

This sequence belongs to the LipB family.

The protein localises to the cytoplasm. It carries out the reaction octanoyl-[ACP] + L-lysyl-[protein] = N(6)-octanoyl-L-lysyl-[protein] + holo-[ACP] + H(+). Its pathway is protein modification; protein lipoylation via endogenous pathway; protein N(6)-(lipoyl)lysine from octanoyl-[acyl-carrier-protein]: step 1/2. Functionally, catalyzes the transfer of endogenously produced octanoic acid from octanoyl-acyl-carrier-protein onto the lipoyl domains of lipoate-dependent enzymes. Lipoyl-ACP can also act as a substrate although octanoyl-ACP is likely to be the physiological substrate. The protein is Octanoyltransferase of Pseudomonas fluorescens (strain ATCC BAA-477 / NRRL B-23932 / Pf-5).